Reading from the N-terminus, the 315-residue chain is Transaldolase (315 aa).

K131 functions as the Schiff-base intermediate with substrate in the catalytic mechanism.

Belongs to the transaldolase family. Type 1 subfamily. Homodimer.

It is found in the cytoplasm. It catalyses the reaction D-sedoheptulose 7-phosphate + D-glyceraldehyde 3-phosphate = D-erythrose 4-phosphate + beta-D-fructose 6-phosphate. It functions in the pathway carbohydrate degradation; pentose phosphate pathway; D-glyceraldehyde 3-phosphate and beta-D-fructose 6-phosphate from D-ribose 5-phosphate and D-xylulose 5-phosphate (non-oxidative stage): step 2/3. Functionally, transaldolase is important for the balance of metabolites in the pentose-phosphate pathway. In Haemophilus ducreyi (strain 35000HP / ATCC 700724), this protein is Transaldolase.